A 125-amino-acid chain; its full sequence is Small ribosomal subunit protein bS6 (125 aa).

It belongs to the bacterial ribosomal protein bS6 family.

Binds together with bS18 to 16S ribosomal RNA. This chain is Small ribosomal subunit protein bS6 (rpsF), found in Campylobacter jejuni subsp. jejuni serotype O:2 (strain ATCC 700819 / NCTC 11168).